The primary structure comprises 259 residues: GTP cyclohydrolase FolE2 (259 aa).

The protein belongs to the GTP cyclohydrolase IV family.

The enzyme catalyses GTP + H2O = 7,8-dihydroneopterin 3'-triphosphate + formate + H(+). It functions in the pathway cofactor biosynthesis; 7,8-dihydroneopterin triphosphate biosynthesis; 7,8-dihydroneopterin triphosphate from GTP: step 1/1. Its function is as follows. Converts GTP to 7,8-dihydroneopterin triphosphate. The chain is GTP cyclohydrolase FolE2 from Thermotoga neapolitana (strain ATCC 49049 / DSM 4359 / NBRC 107923 / NS-E).